A 444-amino-acid chain; its full sequence is Type VII secretion system protein EssB (444 aa).

At 1–229 (MVKNHNPKNE…RKVGHTVFKW (229 aa)) the chain is on the cytoplasmic side. Residues 230 to 250 (VAIGMTTLSVLLIAFLAFLYF) traverse the membrane as a helical segment. Topologically, residues 251-444 (SVMKHNERIE…EKRQEAERKK (194 aa)) are extracellular. A disordered region spans residues 366–444 (KNNGDLSNDK…EKRQEAERKK (79 aa)). Positions 372 to 444 (SNDKRSEETK…EKRQEAERKK (73 aa)) are enriched in basic and acidic residues. Residues 387–443 (LQDILDKEKQVKDEKAKSEEEKAKAKDEKLKQQEENEKKQKEQAQKDKEKRQEAERK) adopt a coiled-coil conformation.

Belongs to the EssB family. As to quaternary structure, may oligomerize and interact with other membrane components to form the Ess system. Interacts with EsaA.

The protein localises to the cell membrane. Its function is as follows. Component of the type VII secretion system (Ess). Required for the secretion of EsxA and proper accumulation of EssB and EssD. In Staphylococcus aureus (strain USA300), this protein is Type VII secretion system protein EssB.